A 217-amino-acid polypeptide reads, in one-letter code: tRNA (guanine-N(7)-)-methyltransferase (217 aa).

Residues glutamate 44, glutamate 69, aspartate 96, and aspartate 118 each contribute to the S-adenosyl-L-methionine site. Aspartate 118 is a catalytic residue. Residues lysine 122, aspartate 154, and 191–194 (TEYE) each bind substrate.

It belongs to the class I-like SAM-binding methyltransferase superfamily. TrmB family.

It catalyses the reaction guanosine(46) in tRNA + S-adenosyl-L-methionine = N(7)-methylguanosine(46) in tRNA + S-adenosyl-L-homocysteine. Its pathway is tRNA modification; N(7)-methylguanine-tRNA biosynthesis. Catalyzes the formation of N(7)-methylguanine at position 46 (m7G46) in tRNA. The polypeptide is tRNA (guanine-N(7)-)-methyltransferase (Bacillus cereus (strain B4264)).